The primary structure comprises 431 residues: Dihydroorotase (431 aa).

Zn(2+) is bound by residues His-55 and His-57. Substrate contacts are provided by residues 57 to 59 (HFR) and Asn-89. Residues Lys-139, His-169, His-223, and Asp-290 each coordinate Zn(2+). The residue at position 139 (Lys-139) is an N6-carboxylysine. Residue Asp-290 is part of the active site. Residues His-294 and 308–309 (PG) contribute to the substrate site.

This sequence belongs to the metallo-dependent hydrolases superfamily. DHOase family. Class I DHOase subfamily. The cofactor is Zn(2+).

The enzyme catalyses (S)-dihydroorotate + H2O = N-carbamoyl-L-aspartate + H(+). It functions in the pathway pyrimidine metabolism; UMP biosynthesis via de novo pathway; (S)-dihydroorotate from bicarbonate: step 3/3. Catalyzes the reversible cyclization of carbamoyl aspartate to dihydroorotate. The sequence is that of Dihydroorotase from Methanothermobacter thermautotrophicus (strain ATCC 29096 / DSM 1053 / JCM 10044 / NBRC 100330 / Delta H) (Methanobacterium thermoautotrophicum).